We begin with the raw amino-acid sequence, 327 residues long: D-alanine--D-alanine ligase (327 aa).

Positions 113–312 (KRLWMTYGLA…YEDFVMQVVA (200 aa)) constitute an ATP-grasp domain. Position 139-194 (139-194 (AADLGLPLIVKPAREGSSIGLTKVTAADQMRAAFEKAAALDNDVIAETFIDGAELT)) interacts with ATP. Asp-266, Glu-279, and Asn-281 together coordinate Mg(2+).

The protein belongs to the D-alanine--D-alanine ligase family. It depends on Mg(2+) as a cofactor. The cofactor is Mn(2+).

The protein localises to the cytoplasm. The catalysed reaction is 2 D-alanine + ATP = D-alanyl-D-alanine + ADP + phosphate + H(+). The protein operates within cell wall biogenesis; peptidoglycan biosynthesis. Functionally, cell wall formation. This Cupriavidus necator (strain ATCC 17699 / DSM 428 / KCTC 22496 / NCIMB 10442 / H16 / Stanier 337) (Ralstonia eutropha) protein is D-alanine--D-alanine ligase.